We begin with the raw amino-acid sequence, 223 residues long: MQAGDTLPFYSNADYQPHRRKGVCSAAHRADVQRGETMMREDVRMHVLRRRISFHYRVDPLKGDSFENNWANNSCDTMQLQDKAGRVLYGAMVQTVANYCFGRMAPGSGVAHGESVAPGAFVVRCFVPARAFHGRIHAITRTWDMDGEWIDREAMQISTEGYQTGRWLIHDRWSEKLGRDTNYAWSAGCFVLSSEDLRRMNEVLDRWGVSCGQEMAGILEELE.

This is an uncharacterized protein from Treponema pallidum (strain Nichols).